A 150-amino-acid chain; its full sequence is Large ribosomal subunit protein bL9 (150 aa).

The protein belongs to the bacterial ribosomal protein bL9 family.

Its function is as follows. Binds to the 23S rRNA. This chain is Large ribosomal subunit protein bL9, found in Ruthia magnifica subsp. Calyptogena magnifica.